A 164-amino-acid polypeptide reads, in one-letter code: Phosphopantetheine adenylyltransferase (164 aa).

S9 is a binding site for substrate. Residues 9–10 (SF) and H17 each bind ATP. The substrate site is built by K41, L73, and K87. ATP is bound by residues 88–90 (GLR), E98, and 123–129 (YSYLSSS).

This sequence belongs to the bacterial CoaD family. As to quaternary structure, homohexamer. Mg(2+) is required as a cofactor.

It is found in the cytoplasm. The enzyme catalyses (R)-4'-phosphopantetheine + ATP + H(+) = 3'-dephospho-CoA + diphosphate. The protein operates within cofactor biosynthesis; coenzyme A biosynthesis; CoA from (R)-pantothenate: step 4/5. Reversibly transfers an adenylyl group from ATP to 4'-phosphopantetheine, yielding dephospho-CoA (dPCoA) and pyrophosphate. The chain is Phosphopantetheine adenylyltransferase from Clostridium botulinum (strain Okra / Type B1).